The primary structure comprises 458 residues: Monomethylamine methyltransferase MtmB1 (458 aa).

Pyl202 is a non-standard amino acid (pyrrolysine).

Belongs to the monomethylamine methyltransferase family. In terms of assembly, dimer of homotrimers. Can form a complex with MtmC (MtmC1 or MtmC2).

It catalyses the reaction Co(I)-[methylamine-specific corrinoid protein] + methylamine + H(+) = methyl-Co(III)-[methylamine-specific corrinoid protein] + NH4(+). The protein operates within one-carbon metabolism; methanogenesis from methylamine. Its function is as follows. Catalyzes the transfer of the methyl group from monomethylamine to the corrinoid cofactor of MtmC (MtmC1 or MtmC2). The protein is Monomethylamine methyltransferase MtmB1 (mtmB1) of Methanosarcina barkeri.